The sequence spans 192 residues: Xanthine phosphoribosyltransferase (192 aa).

Residues leucine 20 and asparagine 27 each contribute to the xanthine site. Position 128 to 132 (128 to 132) interacts with 5-phospho-alpha-D-ribose 1-diphosphate; sequence ADGEA. Residue lysine 156 participates in xanthine binding.

This sequence belongs to the purine/pyrimidine phosphoribosyltransferase family. Xpt subfamily. As to quaternary structure, homodimer.

It localises to the cytoplasm. The catalysed reaction is XMP + diphosphate = xanthine + 5-phospho-alpha-D-ribose 1-diphosphate. The protein operates within purine metabolism; XMP biosynthesis via salvage pathway; XMP from xanthine: step 1/1. Converts the preformed base xanthine, a product of nucleic acid breakdown, to xanthosine 5'-monophosphate (XMP), so it can be reused for RNA or DNA synthesis. In Agathobacter rectalis (strain ATCC 33656 / DSM 3377 / JCM 17463 / KCTC 5835 / VPI 0990) (Eubacterium rectale), this protein is Xanthine phosphoribosyltransferase.